A 120-amino-acid polypeptide reads, in one-letter code: Putative cysteine proteinase inhibitor 11 (120 aa).

The first 24 residues, Met1 to Ala24, serve as a signal peptide directing secretion. The short motif at Gln73 to Gly77 is the Secondary area of contact element.

It belongs to the cystatin family. Phytocystatin subfamily.

The protein resides in the secreted. Its function is as follows. Specific inhibitor of cysteine proteinases. Probably involved in the regulation of endogenous processes and in defense against pests and pathogens. This chain is Putative cysteine proteinase inhibitor 11, found in Oryza sativa subsp. japonica (Rice).